The chain runs to 272 residues: tRNA pseudouridine synthase B (272 aa).

Asp38 acts as the Nucleophile in catalysis.

It belongs to the pseudouridine synthase TruB family. Type 1 subfamily.

The enzyme catalyses uridine(55) in tRNA = pseudouridine(55) in tRNA. Responsible for synthesis of pseudouridine from uracil-55 in the psi GC loop of transfer RNAs. This chain is tRNA pseudouridine synthase B, found in Campylobacter jejuni subsp. jejuni serotype O:2 (strain ATCC 700819 / NCTC 11168).